Consider the following 322-residue polypeptide: Ribosomal RNA small subunit methyltransferase H (322 aa).

Residues 35–37 (GGY), Asp52, Phe79, Asp100, and Gln107 contribute to the S-adenosyl-L-methionine site. The tract at residues 254 to 322 (GATPAGSRHL…TAPKKEGRQG (69 aa)) is disordered. A compositionally biased stretch (low complexity) spans 295 to 309 (SRSATLRVARRTAAA).

It belongs to the methyltransferase superfamily. RsmH family.

It localises to the cytoplasm. The enzyme catalyses cytidine(1402) in 16S rRNA + S-adenosyl-L-methionine = N(4)-methylcytidine(1402) in 16S rRNA + S-adenosyl-L-homocysteine + H(+). In terms of biological role, specifically methylates the N4 position of cytidine in position 1402 (C1402) of 16S rRNA. The chain is Ribosomal RNA small subunit methyltransferase H from Rhizorhabdus wittichii (strain DSM 6014 / CCUG 31198 / JCM 15750 / NBRC 105917 / EY 4224 / RW1) (Sphingomonas wittichii).